We begin with the raw amino-acid sequence, 784 residues long: ATP-dependent 6-phosphofructokinase, platelet type (784 aa).

Met-1 carries the N-acetylmethionine modification. The N-terminal catalytic PFK domain 1 stretch occupies residues 1 to 399 (MDADDSRAPK…NLNTYKRLAI (399 aa)). Ser-6, Ser-12, and Ser-21 each carry phosphoserine. ATP-binding positions include Gly-34, 97–98 (RC), and 127–130 (GDGS). Asp-128 provides a ligand contact to Mg(2+). Position 142 is a phosphoserine (Ser-142). Substrate contacts are provided by residues 173-175 (SID), Arg-210, 217-219 (MGR), Glu-273, Arg-301, and 307-310 (HVQR). Asp-175 acts as the Proton acceptor in catalysis. At Ser-386 the chain carries Phosphoserine. At Lys-395 the chain carries N6-acetyllysine. Residues 400-411 (KLPDDQIPKTNC) are interdomain linker. Positions 412–784 (NVAVINVGAP…QLEHVQPWSV (373 aa)) are C-terminal regulatory PFK domain 2. Beta-D-fructose 2,6-bisphosphate is bound at residue Arg-481. Lys-486 carries the N6-acetyllysine modification. Residues 538-542 (TVSNN), Arg-576, 583-585 (MGG), and Glu-639 each bind beta-D-fructose 2,6-bisphosphate. Residue Ser-540 is glycosylated (O-linked (GlcNAc) serine). Residue Tyr-651 is modified to Phosphotyrosine. Beta-D-fructose 2,6-bisphosphate is bound by residues Arg-665 and 671 to 674 (HMQQ). Residue Lys-688 is modified to N6-acetyllysine. Arg-744 lines the beta-D-fructose 2,6-bisphosphate pocket. Ser-783 carries the phosphoserine modification.

Belongs to the phosphofructokinase type A (PFKA) family. ATP-dependent PFK group I subfamily. Eukaryotic two domain clade 'E' sub-subfamily. As to quaternary structure, homo- and heterotetramers. Phosphofructokinase (PFK) enzyme functions as a tetramer composed of different combinations of 3 types of subunits, called PFKM (where M stands for Muscle), PFKL (Liver) and PFKP (Platelet). The composition of the PFK tetramer differs according to the tissue type it is present in. In muscles, it is composed of 4 PFKM subunits (also called M4). In the liver, the predominant form is a tetramer of PFKL subunits (L4). In erythrocytes, both PFKM and PFKL subunits randomly tetramerize to form M4, L4 and other combinations (ML3, M2L2, M3L). In platelets, brain and fibroblasts, PFK contains a higher proportion of PFKP subunits. The kinetic and regulatory properties of the tetrameric enzyme are dependent on the subunit composition, hence can vary across tissues. Interacts with ATG4B; promoting phosphorylation of ATG4B. Requires Mg(2+) as cofactor. Phosphorylation at Ser-386 promotes interaction with ATG4B. Post-translationally, glcNAcylation decreases enzyme activity.

Its subcellular location is the cytoplasm. It catalyses the reaction beta-D-fructose 6-phosphate + ATP = beta-D-fructose 1,6-bisphosphate + ADP + H(+). It functions in the pathway carbohydrate degradation; glycolysis; D-glyceraldehyde 3-phosphate and glycerone phosphate from D-glucose: step 3/4. Allosterically activated by ADP, AMP, or fructose 2,6-bisphosphate, and allosterically inhibited by ATP or citrate. Catalyzes the phosphorylation of D-fructose 6-phosphate to fructose 1,6-bisphosphate by ATP, the first committing step of glycolysis. The sequence is that of ATP-dependent 6-phosphofructokinase, platelet type (PFKP) from Homo sapiens (Human).